Reading from the N-terminus, the 79-residue chain is DNA-directed RNA polymerase subunit omega (79 aa).

It belongs to the RNA polymerase subunit omega family. In terms of assembly, the RNAP catalytic core consists of 2 alpha, 1 beta, 1 beta' and 1 omega subunit. When a sigma factor is associated with the core the holoenzyme is formed, which can initiate transcription.

It catalyses the reaction RNA(n) + a ribonucleoside 5'-triphosphate = RNA(n+1) + diphosphate. In terms of biological role, promotes RNA polymerase assembly. Latches the N- and C-terminal regions of the beta' subunit thereby facilitating its interaction with the beta and alpha subunits. The chain is DNA-directed RNA polymerase subunit omega from Thermotoga petrophila (strain ATCC BAA-488 / DSM 13995 / JCM 10881 / RKU-1).